The chain runs to 1004 residues: Receptor-type tyrosine-protein phosphatase N2 (1004 aa).

The first 27 residues, 1-27 (MGLPLPLLLLLLLPPPLPRALPAPASA), serve as a signal peptide directing secretion. The involved in localization to secretory granules; interaction with CPE stretch occupies residues 1-409 (MGLPLPLLLL…PEAPLLEKSS (409 aa)). Residues 28-603 (RGRQLPGRLG…HPEEQEDSTK (576 aa)) are Extracellular-facing. Arg-259 bears the Omega-N-methylarginine mark. Disordered stretches follow at residues 274–294 (APALSQRWPLPPGDSKDSLSM), 333–360 (QSDPVEGSQESHGRGAEGQLREQADAPE), and 393–459 (DHGS…WRLE). The residue at position 340 (Ser-340) is a Phosphoserine. 2 stretches are compositionally biased toward basic and acidic residues: residues 341-356 (QESHGRGAEGQLREQA) and 407-418 (KSSRAEMKKSEQ). The span at 419–430 (PEEVLSSEEETA) shows a compositional bias: acidic residues. Residues Ser-424 and Ser-425 each carry the phosphoserine modification. The span at 431 to 450 (GVEHVKSRTYSKDLLERKPN) shows a compositional bias: basic and acidic residues. N-linked (GlcNAc...) asparagine glycosylation occurs at Asn-553. A helical membrane pass occupies residues 604-624 (FIVLTFLSIACILAVLLASSL). Residues 625–1004 (AYCLRHNSHY…VNAILKALPQ (380 aa)) are Cytoplasmic-facing. Positions 655-664 (YQELCRQRMA) match the Tyrosine-based internalization motif motif. The disordered stretch occupies residues 665–710 (VRPQDHSEGPHTSRINSVSSQLSDGPMPSPSARSSTSSWSEEPAQS). The segment covering 677–687 (SRINSVSSQLS) has biased composition (polar residues). Ser-681 is subject to Phosphoserine; by PKA. Phosphoserine is present on Ser-687. The segment covering 694–710 (PSARSSTSSWSEEPAQS) has biased composition (low complexity). Position 700 is a phosphothreonine; by PKA (Thr-700). The Tyrosine-protein phosphatase domain maps to 734 to 994 (LEKEWEALCA…EFALTAVAEE (261 aa)). Residues Asp-902 and 934–940 (CSDGAGR) contribute to the substrate site. Cys-934 (phosphocysteine intermediate) is an active-site residue. Residue Lys-959 is modified to N6-acetyllysine. A substrate-binding site is contributed by Gln-979. The Leucine-based sorting signal signature appears at 993–999 (EEVNAIL).

The protein belongs to the protein-tyrosine phosphatase family. Receptor class 8 subfamily. Self-associates. Interacts (via cytoplasmic domain) with PTPRN (via cytoplasmic domain). Interacts (precursor form) with CPE. Interacts with HAP1. Interacts with AP2A1 or AP2A2 and AP1G1; indicative for an association with adaptor protein complex 2 (AP-2) and adaptor protein complex 1 (AP-1). Interacts with AP2M1; indicative for an association with adaptor protein complex 2 (AP-2). Interacts with MYO5A. Post-translationally, subject to proteolytic cleavage at multiple sites.

It is found in the cytoplasmic vesicle. The protein resides in the secretory vesicle membrane. It localises to the secretory vesicle. Its subcellular location is the synaptic vesicle membrane. The catalysed reaction is O-phospho-L-tyrosyl-[protein] + H2O = L-tyrosyl-[protein] + phosphate. In terms of biological role, plays a role in vesicle-mediated secretory processes. Required for normal accumulation of secretory vesicles in hippocampus, pituitary and pancreatic islets. Required for the accumulation of normal levels of insulin-containing vesicles and preventing their degradation. Plays a role in insulin secretion in response to glucose stimuli. Required for normal accumulation of the neurotransmitters norepinephrine, dopamine and serotonin in the brain. In females, but not in males, required for normal accumulation and secretion of pituitary hormones, such as luteinizing hormone (LH) and follicle-stimulating hormone (FSH). Required to maintain normal levels of renin expression and renin release. May regulate catalytic active protein-tyrosine phosphatases such as PTPRA through dimerization. Has phosphatidylinositol phosphatase activity; the PIPase activity is involved in its ability to regulate insulin secretion. Can dephosphorylate phosphatidylinositol 4,5-biphosphate, phosphatidylinositol 5-phosphate and phosphatidylinositol 3-phosphate. Regulates PI(4,5)P2 level in the plasma membrane and localization of cofilin at the plasma membrane and thus is indirectly involved in regulation of actin dynamics related to cell migration and metastasis; upon hydrolysis of PI(4,5)P2 cofilin is released from the plasma membrane and acts in the cytoplasm in severing F-actin filaments. This is Receptor-type tyrosine-protein phosphatase N2 (Ptprn2) from Rattus norvegicus (Rat).